We begin with the raw amino-acid sequence, 681 residues long: Kojibiose hydrolase (681 aa).

Positions 1-23 (MKKYIFNHVFFFLMLCGSNYLYS) are cleaved as a signal peptide. Positions 74, 343, 344, 391, 392, 407, 472, 473, 538, 539, and 573 each coordinate beta-D-glucose. Glu-472 functions as the Proton donor in the catalytic mechanism. The Proton acceptor role is filled by Glu-616.

The protein belongs to the glycosyl hydrolase 65 family. As to quaternary structure, homohexamer; dimer of trimers.

The protein resides in the periplasm. The enzyme catalyses kojibiose + H2O = beta-D-glucose + D-glucose. Functionally, glycosidase that specifically hydrolyzes kojibiose to beta-glucose and glucose. Also hydrolyzes, with lower catalytic efficiency, longer kojioligosaccharides (from kojitriose to kojipentaose) and shorter oligosaccharides produced by the degradation of dextran-containing alpha-1,2 branches. Probably acts on alpha-(1-&gt;2)-glucosyl isomaltooligosaccharides. Shows weak activity with nigerose but has no activity toward p-nitrophenyl alpha-glucopyranoside, which is a general substrate of exo-acting alpha-glucoside hydrolases. Has a strict specificity for alpha-1,2-glucosidic linkages. Catalyzes the hydrolytic reaction via an anomer-inverting mechanism. The protein is Kojibiose hydrolase of Flavobacterium johnsoniae (strain ATCC 17061 / DSM 2064 / JCM 8514 / BCRC 14874 / CCUG 350202 / NBRC 14942 / NCIMB 11054 / UW101) (Cytophaga johnsonae).